Here is a 945-residue protein sequence, read N- to C-terminus: Cysteine-rich, acidic integral membrane protein (945 aa).

The tract at residues 1–20 (MGNEAGPIFEESNAEVGTPP) is disordered. The N-terminal stretch at 1–23 (MGNEAGPIFEESNAEVGTPPADA) is a signal peptide. Residues 24–882 (VHDDFFFDYK…GKGSSVSAGL (859 aa)) are Extracellular-facing. Residues Asn-34 and Asn-43 are each glycosylated (N-linked (GlcNAc...) asparagine). A run of 66 repeats spans residues 40–51 (DDCNITGDCNET), 52–63 (DDCDITGDCNET), 64–75 (DDCNITGDCNET), 76–87 (DDCNITGDCNET), 88–99 (DDCNITGDCNET), 100–111 (DDCNITGDCNET), 112–123 (DDCDITGDCNET), 124–135 (DDCNITGDCNET), 136–147 (DDCNITGDCNET), 148–159 (DDCNITGDCNET), 160–171 (DDCDITGDCNET), 172–183 (DDCNITGDCNET), 184–195 (DDCDITGDCNET), 196–207 (DDCNITGDCNET), 208–219 (DDCNITGDCNET), 220–231 (DDCNITGDCNET), 232–243 (DDCNITGDCNET), 244–255 (DDCNITGDCNET), 256–267 (DDCNITGDCNET), 268–279 (DDCDITGDCNET), 280–291 (DDCNITGDCNET), 292–303 (DDCNITGDCNET), 304–315 (DDCNITGDCNET), 316–327 (DDCNITGDCNET), 328–339 (DDCNITGDCNET), 340–351 (DDCNITGDCNET), 352–363 (DDCDITGDCNET), 364–375 (DDCNITGDCNET), 376–387 (DDCNITGDCNET), 388–399 (DDCNITGDCNET), 400–411 (DDCNITGDCNET), 412–423 (DDCNITGDCNET), 424–435 (DDCDITGDCNET), 436–447 (DDCNITGDCNET), 448–459 (DDCDITGDCNET), 460–471 (DDCNITGDCNET), 472–483 (DDCNITGDCNET), 484–495 (DDCNITGDCNET), 496–507 (DDCNITGDCNET), 508–519 (DDCNITGDCNET), 520–531 (DDCNITGDCNET), 532–543 (DDCDITGDCNET), 544–555 (DDCNITGDCNET), 556–567 (DDCNITGDCNET), 568–579 (DDCNITGDCNET), 580–591 (DDCNITGDCNET), 592–603 (DDCNITGDCNET), 604–615 (DDCDITGDCNET), 616–627 (DDCNITGDCNET), 628–639 (DDCDITGDCNET), 640–651 (DDCNITGDCNET), 652–663 (DDCNITGDCNET), 664–675 (DDCNITGDCNET), 676–687 (DDCNITGDCNET), 688–699 (DDCNITGDCNET), 700–711 (DDCNITGDCNET), 712–723 (DDCDITGDCNET), 724–735 (DDCNITGDCNET), 736–747 (DDCNITGDCNET), 748–759 (DDCNITGDCNET), 760–771 (DDCNITGDCNET), 772–783 (DDCNITGDCNET), 784–795 (DDCDITGDCNET), 796–807 (DDCNITGDCNET), 808–819 (DDCDITGDCNET), and 820–831 (DDCNITGDCNET). Residues 40–831 (DDCNITGDCN…CNITGDCNET (792 aa)) are 66 X 12 AA tandem repeats of D-D-C-[ND]-I-T-G-D-G-N-E-T. Residues Asn-67, Asn-79, Asn-91, and Asn-103 are each glycosylated (N-linked (GlcNAc...) asparagine). N-linked (GlcNAc...) asparagine glycosylation is found at Asn-127, Asn-139, and Asn-151. Asn-175 carries N-linked (GlcNAc...) asparagine glycosylation. 6 N-linked (GlcNAc...) asparagine glycosylation sites follow: Asn-199, Asn-211, Asn-223, Asn-235, Asn-247, and Asn-259. N-linked (GlcNAc...) asparagine glycosylation is found at Asn-283, Asn-295, Asn-307, Asn-319, Asn-331, and Asn-343. N-linked (GlcNAc...) asparagine glycans are attached at residues Asn-367, Asn-379, Asn-391, Asn-403, and Asn-415. N-linked (GlcNAc...) asparagine glycosylation is present at Asn-439. 6 N-linked (GlcNAc...) asparagine glycosylation sites follow: Asn-463, Asn-475, Asn-487, Asn-499, Asn-511, and Asn-523. N-linked (GlcNAc...) asparagine glycans are attached at residues Asn-547, Asn-559, Asn-571, Asn-583, and Asn-595. The N-linked (GlcNAc...) asparagine glycan is linked to Asn-619. Asn-643, Asn-655, Asn-667, Asn-679, Asn-691, and Asn-703 each carry an N-linked (GlcNAc...) asparagine glycan. Residues Asn-727, Asn-739, Asn-751, Asn-763, and Asn-775 are each glycosylated (N-linked (GlcNAc...) asparagine). Asn-799 carries an N-linked (GlcNAc...) asparagine glycan. A glycan (N-linked (GlcNAc...) asparagine) is linked at Asn-823. Residues 883–903 (LLLAGSTFLVLAVGLSAVLFL) traverse the membrane as a helical segment. The Cytoplasmic segment spans residues 904–945 (GRERQNAVVICDNEVMMEEVPGCLSDASFAVPVTQSSDEARP).

It is found in the flagellar pocket. Its subcellular location is the cell membrane. Its function is as follows. Supposed to function as cell surface receptor. Possibly involved in receptor-mediated endocytosis. In Trypanosoma brucei brucei, this protein is Cysteine-rich, acidic integral membrane protein (CRAM).